The following is a 96-amino-acid chain: Putative defensin-like protein 236 (96 aa).

Residues 1 to 23 (MKNATSLIIYCFLMFLLMNNVKG) form the signal peptide. 4 disulfides stabilise this stretch: Cys31–Cys93, Cys41–Cys70, Cys49–Cys83, and Cys68–Cys85.

This sequence belongs to the DEFL family.

Its subcellular location is the secreted. This chain is Putative defensin-like protein 236 (SCRL20), found in Arabidopsis thaliana (Mouse-ear cress).